The chain runs to 854 residues: DNA mismatch repair protein MutS (854 aa).

616–623 (GPNMGGKS) lines the ATP pocket.

Belongs to the DNA mismatch repair MutS family.

This protein is involved in the repair of mismatches in DNA. It is possible that it carries out the mismatch recognition step. This protein has a weak ATPase activity. The sequence is that of DNA mismatch repair protein MutS from Pectobacterium atrosepticum (strain SCRI 1043 / ATCC BAA-672) (Erwinia carotovora subsp. atroseptica).